A 341-amino-acid chain; its full sequence is Dimethylsulfoniopropionate lyase 7 (341 aa).

2 stretches are compositionally biased toward basic and acidic residues: residues 1 to 10 and 319 to 328; these read MAGKDRKTIE and ERKLAKDRQK. Disordered stretches follow at residues 1–24 and 319–341; these read MAGK…GGRF and ERKL…AFDA.

This sequence belongs to the aspartate/glutamate racemases family. ALMA1 subfamily. Homotetramer.

The catalysed reaction is S,S-dimethyl-beta-propiothetin = acrylate + dimethyl sulfide + H(+). In terms of biological role, mediates cleavage of dimethylsulfoniopropionate (DMSP) into dimethyl sulfide (DMS) and acrylate. DMS is the principal form by which sulfur is transported from oceans to the atmosphere and is a key component of the ocean sulfur cycle. This chain is Dimethylsulfoniopropionate lyase 7, found in Emiliania huxleyi (strain CCMP1516).